Reading from the N-terminus, the 265-residue chain is MPAPSYSTRAAAHPSPVARKLLALMDEKKSNLCASVDVTTTAELLALVEKLAPYICMVKTHIDIVSDFSYEGTVVPLVALAKKHRFLLFEDRKFADIGNTVKHQYAGGVYQIARWADITNAHGVTGAGIVAGLKQAAEETTSEPRGLLMLAELSSKGAIAHGKYTEETVEIAKTDKEFVFGFIAQGDMGGREEGFDWVVMTPGVGLDDTGDALGQQYRTVDTVVQTGTDVIIVGRGLFGKGRHPAVEGERYRKAGWDAYTKRVSP.

Substrate-binding positions include D37, 59–61 (KTH), 91–100 (DRKFADIGNT), Y217, and R235. The active-site Proton donor is K93.

The protein belongs to the OMP decarboxylase family.

The catalysed reaction is orotidine 5'-phosphate + H(+) = UMP + CO2. It functions in the pathway pyrimidine metabolism; UMP biosynthesis via de novo pathway; UMP from orotate: step 2/2. This chain is Orotidine 5'-phosphate decarboxylase (URA3), found in Diutina rugosa (Yeast).